A 131-amino-acid chain; its full sequence is Profilin-3 (131 aa).

Belongs to the profilin family. Occurs in many kinds of cells as a complex with monomeric actin in a 1:1 ratio.

The protein localises to the cytoplasm. It is found in the cytoskeleton. In terms of biological role, binds to actin and affects the structure of the cytoskeleton. At high concentrations, profilin prevents the polymerization of actin, whereas it enhances it at low concentrations. By binding to PIP2, it inhibits the formation of IP3 and DG. The polypeptide is Profilin-3 (PRO3) (Triticum aestivum (Wheat)).